The primary structure comprises 245 residues: 8-amino-3,8-dideoxy-manno-octulosonate cytidylyltransferase (245 aa).

Belongs to the KdsB family.

It localises to the cytoplasm. The enzyme catalyses 8-amino-3,8-dideoxy-alpha-D-manno-octulosonate + CTP = CMP-8-amino-3,8-dideoxy-alpha-D-manno-oct-2-ulosonate + diphosphate. Its pathway is bacterial outer membrane biogenesis; lipopolysaccharide biosynthesis. Activates KDO8N (a required 8-carbon sugar) for incorporation into bacterial lipopolysaccharide in the Shewanella genus. This is 8-amino-3,8-dideoxy-manno-octulosonate cytidylyltransferase from Shewanella woodyi (strain ATCC 51908 / MS32).